Here is a 299-residue protein sequence, read N- to C-terminus: Tyrosine recombinase XerC (299 aa).

In terms of domain architecture, Core-binding (CB) spans 1 to 85; that stretch reads MDQHLDAYCM…AVRGFYKYLN (85 aa). Positions 106–285 constitute a Tyr recombinase domain; it reads RLPKTLDTDR…DFQHLATVYD (180 aa). Residues Arg146, Lys170, His237, Arg240, and His263 contribute to the active site. Catalysis depends on Tyr272, which acts as the O-(3'-phospho-DNA)-tyrosine intermediate.

This sequence belongs to the 'phage' integrase family. XerC subfamily. Forms a cyclic heterotetrameric complex composed of two molecules of XerC and two molecules of XerD.

The protein resides in the cytoplasm. Its function is as follows. Site-specific tyrosine recombinase, which acts by catalyzing the cutting and rejoining of the recombining DNA molecules. The XerC-XerD complex is essential to convert dimers of the bacterial chromosome into monomers to permit their segregation at cell division. It also contributes to the segregational stability of plasmids. This is Tyrosine recombinase XerC from Pseudomonas syringae pv. syringae (strain B728a).